We begin with the raw amino-acid sequence, 852 residues long: Disks large homolog 2 (852 aa).

2 S-palmitoyl cysteine lipidation sites follow: C5 and C7. The residue at position 28 (S28) is a Phosphoserine. At Y58 the chain carries Phosphotyrosine. S65 carries the phosphoserine modification. PDZ domains lie at 98–185 (EITL…RRRR) and 193–280 (EIKL…GKPT). S307, S328, S360, S365, S406, and S414 each carry phosphoserine. A PDZ 3 domain is found at 421–502 (KVVLHKGSTG…TVTIIAQYQP (82 aa)). Residue Y505 is modified to Phosphotyrosine. Residues S528, S530, and S553 each carry the phosphoserine modification. The SH3 domain occupies 536–606 (KRSLYVRAMF…PSKRRVERKE (71 aa)). Residues 662-837 (TRPVIILGPM…IYNQCKLVIE (176 aa)) enclose the Guanylate kinase-like domain. Y732 and Y737 each carry phosphotyrosine.

Interacts with NOS1/nNOS through second PDZ domain. Interacts with KCNJ2/Kir2.1 (via C-terminus) through one of its PDZ domains. Interacts with KCNJ4. Interacts with FRMPD4 (via C-terminus). Interacts through its PDZ domains with NETO1. Interacts with LRFN1, LRFN2 and LRFN4. Interacts with FASLG. Interacts with KCNJ4. Interacts with ADAM22. Interacts with DGKI (via PDZ-binding motif). In terms of processing, palmitoylation of isoform 1 and isoform 2 is not required for targeting to postsynaptic density. As to expression, brain. Highest levels of isoform 1 in cortex, olfactory bulb, thalamus, hypothalamus, striatum and hippocampus. Highest level of isoform 2 in olfactory bulb. Reduced levels in cortex and hippocampus. Highest level of isoform 4 in spinal cord. Low levels of isoform 4, isoform 6, and isoform 7 in superior cervical ganglion.

It localises to the cell membrane. It is found in the postsynaptic density. The protein resides in the synapse. The protein localises to the membrane. Its subcellular location is the cell projection. It localises to the axon. It is found in the perikaryon. In terms of biological role, required for perception of chronic pain through NMDA receptor signaling. Regulates surface expression of NMDA receptors in dorsal horn neurons of the spinal cord. Interacts with the cytoplasmic tail of NMDA receptor subunits as well as inward rectifying potassium channels. Involved in regulation of synaptic stability at cholinergic synapses. Part of the postsynaptic protein scaffold of excitatory synapses. This is Disks large homolog 2 (Dlg2) from Mus musculus (Mouse).